A 126-amino-acid chain; its full sequence is Holo-[acyl-carrier-protein] synthase (126 aa).

Mg(2+) contacts are provided by Asp-9 and Glu-58.

It belongs to the P-Pant transferase superfamily. AcpS family. Mg(2+) serves as cofactor.

It localises to the cytoplasm. It catalyses the reaction apo-[ACP] + CoA = holo-[ACP] + adenosine 3',5'-bisphosphate + H(+). In terms of biological role, transfers the 4'-phosphopantetheine moiety from coenzyme A to a Ser of acyl-carrier-protein. In Hamiltonella defensa subsp. Acyrthosiphon pisum (strain 5AT), this protein is Holo-[acyl-carrier-protein] synthase.